Consider the following 676-residue polypeptide: Lutropin-choriogonadotropic hormone receptor (676 aa).

The first 29 residues, 1–29 (MKQPLLALQLLKLLLLLLLPLPPLPRALR), serve as a signal peptide directing secretion. Topologically, residues 30 to 340 (EARCCPEPCN…EDIMGYDFLR (311 aa)) are extracellular. Residue asparagine 103 is glycosylated (N-linked (GlcNAc...) asparagine). LRR repeat units follow at residues 126 to 151 (LPRLKYLSICNTGIRKFPDVTKIFSS), 153 to 175 (TNFILEICDNLHITTIPGNAFQG), 176 to 200 (MNNESITLKLYGNGFEEVQSHAFNG), 201 to 224 (TTVISLVLKENVHLERIHNGAFRG), and 225 to 248 (ATGPSILDISSTKLQALPSHGLES). N-linked (GlcNAc...) asparagine glycans are attached at residues asparagine 178 and asparagine 199. The residue at position 308 (tyrosine 308) is a Sulfotyrosine. Residues 341–362 (VLIWLINILAIMGNMTVLFVLL) traverse the membrane as a helical segment. The Cytoplasmic portion of the chain corresponds to 363-372 (TSRYKLTVPR). A helical membrane pass occupies residues 373–393 (FLMCNLSFADFCMGLYLLLIA). Residues 394-416 (SVDSQTKGQYYNHAIDWQTGSGC) are Extracellular-facing. An intrachain disulfide couples cysteine 416 to cysteine 491. Residues 417-439 (NTAGFFTVFASELSVYTLTVITL) traverse the membrane as a helical segment. Topologically, residues 440-459 (ERWHTITYAIHLDQKLRLRH) are cytoplasmic. A helical transmembrane segment spans residues 460–482 (AILIMLGGWLFSSLIAMLPLVGV). Residues 483 to 502 (SNYMKVSICFPMDVETTLSQ) are Extracellular-facing. Residues 503-526 (IYILTILILNVVAFIIICACYIKI) traverse the membrane as a helical segment. The Cytoplasmic portion of the chain corresponds to 527 to 547 (YFAVRNPELMATNKDTKIAKK). A helical transmembrane segment spans residues 548-571 (MAILIFTDFTCMAPISFFAISAAF). Topologically, residues 572 to 582 (KMPLITVTNSK) are extracellular. A helical transmembrane segment spans residues 583 to 604 (VLLVLFYPINSCANPFLYAIFT). The Cytoplasmic portion of the chain corresponds to 605 to 676 (KTFRRDFFLL…LLDKTCYKEY (72 aa)). Residues cysteine 620 and cysteine 621 are each lipidated (S-palmitoyl cysteine).

The protein belongs to the G-protein coupled receptor 1 family. FSH/LSH/TSH subfamily. In terms of processing, sulfated.

The protein localises to the cell membrane. Receptor for lutropin-choriogonadotropic hormone. The activity of this receptor is mediated by G proteins which activate adenylate cyclase. The polypeptide is Lutropin-choriogonadotropic hormone receptor (LHCGR) (Callithrix jacchus (White-tufted-ear marmoset)).